A 517-amino-acid chain; its full sequence is UDP-N-acetylmuramoyl-L-alanyl-D-glutamate--2,6-diaminopimelate ligase (517 aa).

Leu-34 and Ser-36 together coordinate UDP-N-acetyl-alpha-D-muramoyl-L-alanyl-D-glutamate. An ATP-binding site is contributed by 122–128 (GTSGKTT). Residues 164–165 (TT), Ser-191, and Arg-199 contribute to the UDP-N-acetyl-alpha-D-muramoyl-L-alanyl-D-glutamate site. At Lys-231 the chain carries N6-carboxylysine. Meso-2,6-diaminopimelate is bound by residues Arg-394, 418 to 421 (DNPR), Gly-476, and Glu-480. The short motif at 418 to 421 (DNPR) is the Meso-diaminopimelate recognition motif element.

It belongs to the MurCDEF family. MurE subfamily. Requires Mg(2+) as cofactor. In terms of processing, carboxylation is probably crucial for Mg(2+) binding and, consequently, for the gamma-phosphate positioning of ATP.

The protein localises to the cytoplasm. The enzyme catalyses UDP-N-acetyl-alpha-D-muramoyl-L-alanyl-D-glutamate + meso-2,6-diaminopimelate + ATP = UDP-N-acetyl-alpha-D-muramoyl-L-alanyl-gamma-D-glutamyl-meso-2,6-diaminopimelate + ADP + phosphate + H(+). The protein operates within cell wall biogenesis; peptidoglycan biosynthesis. Functionally, catalyzes the addition of meso-diaminopimelic acid to the nucleotide precursor UDP-N-acetylmuramoyl-L-alanyl-D-glutamate (UMAG) in the biosynthesis of bacterial cell-wall peptidoglycan. The sequence is that of UDP-N-acetylmuramoyl-L-alanyl-D-glutamate--2,6-diaminopimelate ligase from Corynebacterium glutamicum (strain ATCC 13032 / DSM 20300 / JCM 1318 / BCRC 11384 / CCUG 27702 / LMG 3730 / NBRC 12168 / NCIMB 10025 / NRRL B-2784 / 534).